Consider the following 194-residue polypeptide: dTTP/UTP pyrophosphatase (194 aa).

Catalysis depends on D69, which acts as the Proton acceptor.

The protein belongs to the Maf family. YhdE subfamily. Requires a divalent metal cation as cofactor.

It is found in the cytoplasm. It carries out the reaction dTTP + H2O = dTMP + diphosphate + H(+). The catalysed reaction is UTP + H2O = UMP + diphosphate + H(+). In terms of biological role, nucleoside triphosphate pyrophosphatase that hydrolyzes dTTP and UTP. May have a dual role in cell division arrest and in preventing the incorporation of modified nucleotides into cellular nucleic acids. This chain is dTTP/UTP pyrophosphatase, found in Moorella thermoacetica (strain ATCC 39073 / JCM 9320).